Reading from the N-terminus, the 702-residue chain is ATP-dependent zinc metalloprotease FtsH (702 aa).

The Cytoplasmic portion of the chain corresponds to M1–K26. A helical membrane pass occupies residues V27–P47. Over R48 to D175 the chain is Extracellular. The chain crosses the membrane as a helical span at residues V176 to F196. Residues W197–S702 are Cytoplasmic-facing. An ATP-binding site is contributed by G271 to T278. Zn(2+) is bound at residue H493. E494 is a catalytic residue. 2 residues coordinate Zn(2+): H497 and D572. The interval E682 to S702 is disordered. The span at N690 to S702 shows a compositional bias: basic and acidic residues.

It in the central section; belongs to the AAA ATPase family. The protein in the C-terminal section; belongs to the peptidase M41 family. In terms of assembly, homohexamer. Zn(2+) is required as a cofactor.

The protein localises to the cell membrane. Functionally, acts as a processive, ATP-dependent zinc metallopeptidase for both cytoplasmic and membrane proteins. Plays a role in the quality control of integral membrane proteins. In Mycoplasma genitalium (strain ATCC 33530 / DSM 19775 / NCTC 10195 / G37) (Mycoplasmoides genitalium), this protein is ATP-dependent zinc metalloprotease FtsH.